The chain runs to 1399 residues: MVVVSKNNEQQSLILTTELLRTAIFNISYIRGLFPVRYFKDMSVPALDLKMKKLMPMDAESRRLIGWMEKGVYDALHKKHLKKLIFYICETVDGPLIEEYIFSFSYSDSDSQDVRMNINITGINTYGGTLNSTADNSTADMTLNQMSSVDEDFGQNARRSNAFVTYQRFSVYISFHIANYRLCYFFASVQRTILMKLLYYEYVPPDYQPPFFRGCSEEEEAQYVWPKIPLRMEIGNVNSQHHVLTVKVKSVLDPYDPCEDENDNMQDDERSKGPDSLHDDQPCKVFTKPSKLILTENKDADHGEVNEEKLLLITPICEILQDVKQDQVEHQLAKVKDTKGRPASIVQNPILQSHEYDIRRLKARLQRLERHISVPDSPQEGIRKWFAAVSSQLFYKVMEACTRRKPILGDAILSSTVKVQNFNAKICSKLLKKPASIYRKKHFTLNSASLRISGLAGSIFAWAVGFCLFSAQIGHVFVQPKTRSSESKPKVTMEELEEKLTPPSSEPKSAPPSSEPKSAPPSSEPLEKLAVIRRILPEIFAQRCGQRNSSFEAFAQRRTTYDYYNIRLNPREIIFRRLQEESKVALALSSANYFVLSILYRFFRQWSEVSLVRRNSRLTGNPSNEAQSSRSNRIEIPTLLDEPDREGSGGHLAAPEDPVDFLAQFDPLIDLEDAYNTQPQYTEAEVNARLLHEDHVEFDLVPVVSWNTEITAKKTLSTTESVAEVFALCGSGDRPLTCMIPGENERPWNPPRGYVCMYEAYFRQCHLWFPIPSLIISFLNRRHMAFSQLTPAAICNFVAALTFGAEEGYLVNVRCFEEMTTLKAIRSPGYWVVNNRPKHNFLPGPKVSNFKNWEEYYFYVRVDLESYERPFSGRKRMWTEFPDRYRPSPDFPVEFEGVLEAIFRARRRTWKDVTRSRVNRIMGKVRKSFISFAAGLLNMPPPPAPIEEERQPLDGEAAASNPPVSAGPSGVDQVSHEMVNPESQDRMCLEGADVVPAQEIAECDRSQSVQVVEPEVQNITDDRSVVVYAAPPAGEEVNTGLTILDQDKDETVAEPGISRRSREEKGKGGANQSKKRSASEAGLDEAAAPKTFRLSRGETLNSDQFTFKYSGEKFLVRDQEAASHLWRNLMLPGTKDFPNPDDLVLKEGYQKFARSSLETAALANDLIATYDRKLKLKLADREAFDNLKKCADQAKAIYAKDMKEMASLRDAAEIHKAEMSSLNDEVKRLNSREADLQKEFSDLQVALVAVKEHGERECNRLRNDRAAKVARTTKKAQARLDRVKAYLKEQEDLVGPKVDAENQARGAEEIVGILMQRGAKIAASELSGLKELTKRATDEVNALNVIELGDDDLNMSPDQLGFSRQISQVAPVADQHGSNVDLLAEVIRRVSVEETNQTT.

Residues 10–248 (QQSLILTTEL…SQHHVLTVKV (239 aa)) enclose the HORMA domain. Residues 257–266 (PCEDENDNMQ) are compositionally biased toward acidic residues. 5 disordered regions span residues 257–281 (PCEDENDNMQDDERSKGPDSLHDDQ), 487–525 (SKPKVTMEELEEKLTPPSSEPKSAPPSSEPKSAPPSSEP), 617–656 (RLTGNPSNEAQSSRSNRIEIPTLLDEPDREGSGGHLAAPE), 940–974 (PPPPAPIEEERQPLDGEAAASNPPVSAGPSGVDQV), and 1045–1090 (DQDK…AAPK). Positions 267-281 (DDERSKGPDSLHDDQ) are enriched in basic and acidic residues. Residues 509–523 (SAPPSSEPKSAPPSS) show a composition bias toward pro residues. The segment covering 617–631 (RLTGNPSNEAQSSRS) has biased composition (polar residues). A coiled-coil region spans residues 1205–1246 (MASLRDAAEIHKAEMSSLNDEVKRLNSREADLQKEFSDLQVA).

The protein localises to the chromosome. It is found in the nucleus. Required for normal meiosis. The polypeptide is Meiosis-specific protein ASY2 (Arabidopsis thaliana (Mouse-ear cress)).